We begin with the raw amino-acid sequence, 353 residues long: Photosystem II D2 protein (353 aa).

Thr2 is modified (N-acetylthreonine). Phosphothreonine is present on Thr2. The chain crosses the membrane as a helical span at residues 41-61; it reads CAYFALGGWFTGTTFVTSWYT. His118 is a chlorophyll a binding site. The helical transmembrane segment at 125–141 threads the bilayer; it reads GFMLRQFELARSVQLRP. Pheophytin a is bound by residues Gln130 and Asn143. The chain crosses the membrane as a helical span at residues 153-166; that stretch reads VFVSVFLIYPLGQS. His198 provides a ligand contact to chlorophyll a. The helical transmembrane segment at 208–228 threads the bilayer; that stretch reads AALLCAIHGATVENTLFEDGD. Residues His215 and Phe262 each contribute to the a plastoquinone site. Residue His215 participates in Fe cation binding. A Fe cation-binding site is contributed by His269. Residues 279 to 295 traverse the membrane as a helical segment; sequence GLWMSALGVVGLALNLR.

It belongs to the reaction center PufL/M/PsbA/D family. As to quaternary structure, PSII is composed of 1 copy each of membrane proteins PsbA, PsbB, PsbC, PsbD, PsbE, PsbF, PsbH, PsbI, PsbJ, PsbK, PsbL, PsbM, PsbT, PsbX, PsbY, PsbZ, Psb30/Ycf12, at least 3 peripheral proteins of the oxygen-evolving complex and a large number of cofactors. It forms dimeric complexes. It depends on The D1/D2 heterodimer binds P680, chlorophylls that are the primary electron donor of PSII, and subsequent electron acceptors. It shares a non-heme iron and each subunit binds pheophytin, quinone, additional chlorophylls, carotenoids and lipids. There is also a Cl(-1) ion associated with D1 and D2, which is required for oxygen evolution. The PSII complex binds additional chlorophylls, carotenoids and specific lipids. as a cofactor.

It localises to the plastid. The protein resides in the chloroplast thylakoid membrane. It catalyses the reaction 2 a plastoquinone + 4 hnu + 2 H2O = 2 a plastoquinol + O2. In terms of biological role, photosystem II (PSII) is a light-driven water:plastoquinone oxidoreductase that uses light energy to abstract electrons from H(2)O, generating O(2) and a proton gradient subsequently used for ATP formation. It consists of a core antenna complex that captures photons, and an electron transfer chain that converts photonic excitation into a charge separation. The D1/D2 (PsbA/PsbD) reaction center heterodimer binds P680, the primary electron donor of PSII as well as several subsequent electron acceptors. D2 is needed for assembly of a stable PSII complex. The polypeptide is Photosystem II D2 protein (Phaseolus vulgaris (Kidney bean)).